A 66-amino-acid chain; its full sequence is DNA-directed RNA polymerase subunit Rpo10 (66 aa).

The Zn(2+) site is built by Cys-7, Cys-10, Cys-47, and Cys-48.

The protein belongs to the archaeal Rpo10/eukaryotic RPB10 RNA polymerase subunit family. As to quaternary structure, part of the RNA polymerase complex. Zn(2+) is required as a cofactor.

It is found in the cytoplasm. The catalysed reaction is RNA(n) + a ribonucleoside 5'-triphosphate = RNA(n+1) + diphosphate. DNA-dependent RNA polymerase (RNAP) catalyzes the transcription of DNA into RNA using the four ribonucleoside triphosphates as substrates. The polypeptide is DNA-directed RNA polymerase subunit Rpo10 (Haloarcula marismortui (strain ATCC 43049 / DSM 3752 / JCM 8966 / VKM B-1809) (Halobacterium marismortui)).